The sequence spans 214 residues: Phosphoenolpyruvate guanylyltransferase (214 aa).

Positions 148, 163, and 166 each coordinate phosphoenolpyruvate.

The protein belongs to the CofC family.

It catalyses the reaction phosphoenolpyruvate + GTP + H(+) = enolpyruvoyl-2-diphospho-5'-guanosine + diphosphate. The protein operates within cofactor biosynthesis; coenzyme F420 biosynthesis. Its function is as follows. Guanylyltransferase that catalyzes the activation of phosphoenolpyruvate (PEP) as enolpyruvoyl-2-diphospho-5'-guanosine, via the condensation of PEP with GTP. It is involved in the biosynthesis of coenzyme F420, a hydride carrier cofactor. The protein is Phosphoenolpyruvate guanylyltransferase of Mycolicibacterium gilvum (strain PYR-GCK) (Mycobacterium gilvum (strain PYR-GCK)).